Reading from the N-terminus, the 900-residue chain is MVMNILTKIFGSRNDRTLRRMRKNVDVINRLEPEMEKLSDEELQAKTLEFRVRLEKGESLENLLPEAFAVVRESSKRVFGMRHFDVQLIGGMVLNERCIAEMRTGEGKTLTATLPAYLNALTGRGVHVVTVNDYLAQRDAENNRPLFEFLGLSVGINLPGMPAPAKREAYAADITYGTNNEYGFDYLRDNMAFSPEERVQRKLYYALVDEVDSILIDEARTPLIISGPAEDSSELYISVNKIIPHLIRQEKEDSDTFHGEGHFSVDEKARQVNLTERGLVLVEELLVKEGIMEEGESLYSPTNIMLMHHVTAALRAHVLFTRDVDYIVKDGEVIIVDEHTGRTMQGRRWSDGLHQAVEAKEKVTIQNENQTLASITFQNYFRLYEKLAGMTGTADTEAFEFSSIYKLDTIVVPTNRPMIRKDLPDLVYMTEQEKIDAIIEDIKERSVKGQPILVGTISIEKSEVVSHALEKAGIKHNVLNAKFHAMEADIVAQAGQAGAVTIATNMAGRGTDIVLGGSWQAEVALLENPNDEQIAEIKAAWKVRHDAVLAAGGLHIIGTERHESRRIDNQLRGRSGRQGDAGSSRFYLSMEDALMRIFASDRVSNMMRKLGMKPGEAIEHPWVTKAIANAQRKVESRNFDIRKQLLEYDDVANDQRRAIYTQRNELLDVSDISETITSIREDVFKATIDSYIPPQSLEEMWDVEGLEQRLKNDFDLDMPVKAWLDKEPELHEETLRERIFQQALEVYHRKEEVVGSEVMRNFEKGVMLQTLDSLWKEHLAAMDYLRQGIHLRGYAQKDPKQEYKRESFSMFAAMLESLKYEVISTLSKVQVRMPEEIEALEQQRREEAERLARQQQLSHQEEDSLNTGSPAQADRKIGRNDPCPCGSGKKYKQCHGRLQK.

Residues Gln-87, 105-109 (GEGKT), and Asp-512 each bind ATP. A compositionally biased stretch (basic and acidic residues) spans 842–852 (QQRREEAERLA). Residues 842–900 (QQRREEAERLARQQQLSHQEEDSLNTGSPAQADRKIGRNDPCPCGSGKKYKQCHGRLQK) are disordered. Residues Cys-883, Cys-885, Cys-894, and His-895 each coordinate Zn(2+). The span at 889–900 (KKYKQCHGRLQK) shows a compositional bias: basic residues.

This sequence belongs to the SecA family. As to quaternary structure, monomer and homodimer. Part of the essential Sec protein translocation apparatus which comprises SecA, SecYEG and auxiliary proteins SecDF-YajC and YidC. Zn(2+) is required as a cofactor.

It is found in the cell inner membrane. Its subcellular location is the cytoplasm. The catalysed reaction is ATP + H2O + cellular proteinSide 1 = ADP + phosphate + cellular proteinSide 2.. In terms of biological role, part of the Sec protein translocase complex. Interacts with the SecYEG preprotein conducting channel. Has a central role in coupling the hydrolysis of ATP to the transfer of proteins into and across the cell membrane, serving both as a receptor for the preprotein-SecB complex and as an ATP-driven molecular motor driving the stepwise translocation of polypeptide chains across the membrane. The chain is Protein translocase subunit SecA from Pectobacterium carotovorum subsp. carotovorum (strain PC1).